A 321-amino-acid polypeptide reads, in one-letter code: Olfactory receptor 56B34 (321 aa).

Over 1-36 (MGTALHETNSSEVHVSEFILLGFPGIHEFQIWLSLP) the chain is Extracellular. A helical transmembrane segment spans residues 37 to 57 (MALLYIVALGANLLILITIYL). Over 58-70 (EPTLHQPMYQFLG) the chain is Cytoplasmic. Residues 71 to 91 (ILAAVDIGLATTSMPKILAIL) form a helical membrane-spanning segment. Residues 92-105 (WFDAKTISLPECFA) lie on the Extracellular side of the membrane. Cysteine 103 and cysteine 185 are oxidised to a cystine. A helical transmembrane segment spans residues 106 to 126 (QIYAIHTFMCMESGVFLCMAI). The Cytoplasmic portion of the chain corresponds to 127-128 (DR). Residues 129 to 149 (YVAICYPLQYPSIVTEAFVIK) form a helical membrane-spanning segment. Topologically, residues 150–207 (ATLSMLLRNGLLTIPVPVLAAQRQYCSRNEIDHCLCSNLGVISLACDDITVNRFYQLA) are extracellular. A helical membrane pass occupies residues 208-228 (LAWLVVGSDMILVYASYALII). Topologically, residues 229–250 (RSVLRLNSTEAASKALSTCSSH) are cytoplasmic. Residues 251 to 271 (LILIMFYYTAIVIVSVTHLAG) form a helical membrane-spanning segment. At 272–275 (RRVP) the chain is on the extracellular side. A helical transmembrane segment spans residues 276–296 (LIPVLLNVMHIVIPPSLNPVV). At 297 to 321 (YALRTQELKVGFRKVFSLSEFVSRK) the chain is on the cytoplasmic side.

This sequence belongs to the G-protein coupled receptor 1 family.

Its subcellular location is the cell membrane. Odorant receptor. The protein is Olfactory receptor 56B34 of Mus musculus (Mouse).